The primary structure comprises 320 residues: N-acetylneuraminate lyase (320 aa).

2 residues coordinate aceneuramate: Thr-51 and Thr-52. The active-site Proton donor is the Tyr-143. Lys-173 (schiff-base intermediate with substrate) is an active-site residue. Residues Ser-175, Gly-199, Asp-201, Glu-202, and Ser-218 each coordinate aceneuramate.

It belongs to the DapA family. NanA subfamily. In terms of assembly, homotetramer.

The protein resides in the cytoplasm. It catalyses the reaction aceneuramate = aldehydo-N-acetyl-D-mannosamine + pyruvate. The protein operates within amino-sugar metabolism; N-acetylneuraminate degradation. Catalyzes the cleavage of N-acetylneuraminic acid (sialic acid) to form pyruvate and N-acetylmannosamine via a Schiff base intermediate. It prevents sialic acids from being recycled and returning to the cell surface. Involved in the N-glycolylneuraminic acid (Neu5Gc) degradation pathway. The chain is N-acetylneuraminate lyase from Pongo abelii (Sumatran orangutan).